The chain runs to 375 residues: Mitogen-activated protein kinase 4a (375 aa).

One can recognise a Protein kinase domain in the interval 39 to 325 (KPPLRPIGRG…VEAALAHPYL (287 aa)). ATP contacts are provided by residues 45-53 (IGRGAYGIV) and Lys68. Asp165 functions as the Proton acceptor in the catalytic mechanism. Thr197 is modified (phosphothreonine). The short motif at 197 to 199 (TEY) is the TXY element. Residue Tyr199 is modified to Phosphotyrosine.

It belongs to the protein kinase superfamily. CMGC Ser/Thr protein kinase family. MAP kinase subfamily. The cofactor is Mg(2+). Dually phosphorylated on Thr-197 and Tyr-199, which activates the enzyme. Phosphorylated in response to pathogen-associated molecular pattern (PAMP) chitin and in response to necrotrophic fungus B.cinerea spores. Not phosphorylated in response to osmotic stress. Expressed strongly in the apical cells of caulonemal air filaments and rhizoids in fully developed plants and less strongly, but readily detectable in filamentous protonemal tissue at the edge of the plant consisting of both chloronema and caulonema. When filamentous growth of protonema is promoted, the expression is strongest in newly formed apical tip cells of protonemal tissue.

The protein localises to the cytoplasm. It localises to the nucleus. The enzyme catalyses L-seryl-[protein] + ATP = O-phospho-L-seryl-[protein] + ADP + H(+). It catalyses the reaction L-threonyl-[protein] + ATP = O-phospho-L-threonyl-[protein] + ADP + H(+). Its activity is regulated as follows. Activated by threonine and tyrosine phosphorylation. Activated in response to bacterial and fungal pathogen-associated molecular patterns (PAMPs) including chitin, chitosan and peptidyl glycans (PGNs). Activation in response to chitin requires the CERK1, MEKK1a/b, MKK1a/b/c and MPK4a/b signaling pathway. Activated in response to necrotrophic fungus B.cinerea spores. Not activated in response to osmotic stress. In terms of biological role, the CERK1, MEKK1a/b, MKK1a/b/c and MPK4a/b proteins are involved in pathogen defense. The pathway induces rapid growth inhibition, cell wall depositions and accumulation of defense-related transcripts. This protein is required for innate immunity triggered by pathogen-associated molecular patterns (PAMPs). Involved in resistance to necrotrophic fungi B.cinerea and A.brassicicola. Involved in the transduction of signals from chitosan perception to the activation of defense genes. The chain is Mitogen-activated protein kinase 4a (MPK4a) from Physcomitrium patens (Spreading-leaved earth moss).